The sequence spans 362 residues: G-protein coupled receptor homolog US27 (362 aa).

Topologically, residues 1–34 (MTTSTNNQTLTQVSNMTNHTLNSTEIYQLFEYTR) are virion surface. Asn7, Asn15, Asn18, and Asn22 each carry an N-linked (GlcNAc...) asparagine; by host glycan. Residues 35–58 (LGVWLMCIVGTFLNVLVITTILYY) traverse the membrane as a helical segment. Residues 59 to 67 (RRKKKSPSD) are Intravirion-facing. Residues 68–90 (TYICNLAVADLLIVVGLPFFLEY) traverse the membrane as a helical segment. Over 91-104 (AKHHPKLSREVVCS) the chain is Virion surface. A helical transmembrane segment spans residues 105–126 (GLNACFYICLFAGVCFLINLSM). Over 127–148 (DRYCVIVWGVELNRVRNNKRAT) the chain is Intravirion. Residues 149-167 (CWVVIFWILAVLMGMPHYL) traverse the membrane as a helical segment. At 168–193 (MYSHTNNECVGEFANETSGWFPVFLN) the chain is on the virion surface side. The helical transmembrane segment at 194–213 (TKVNICGYLAPIALMAYTYN) threads the bilayer. Residues 214-233 (RMVRFIINYVGKWHMQTLHV) lie on the Intravirion side of the membrane. Residues 234-257 (LLVVVVSFASFWFPFNLALFLESI) form a helical membrane-spanning segment. Topologically, residues 258–274 (RLLAGVYNDTLQNVIIF) are virion surface. A helical transmembrane segment spans residues 275-298 (CLYVGQFLAYVRACLNPGIYILVG). Over 299-362 (TQMRKDMWTT…MESGEEEFLL (64 aa)) the chain is Intravirion. Residues 341–362 (TKRTHYDRKNAPMESGEEEFLL) are disordered.

This sequence belongs to the G-protein coupled receptor 1 family. As to quaternary structure, heterodimer with US28. Interacts with host Gi alpha-1 subunit GNAI1; this interaction does not lead to the catalytic activation of Gi complex.

Its subcellular location is the virion. The protein localises to the host cell membrane. Its function is as follows. Interacts with the host Gi complex without activating it, thereby probably interfering with the chemokine-Gi signaling. May also function as a G protein sink to sequester G protein from the cell surface via internalization. Plays an important role in spread of HCMV via the extracellular route. The chain is G-protein coupled receptor homolog US27 (US27) from Homo sapiens (Human).